The following is a 318-amino-acid chain: Methionyl-tRNA formyltransferase (318 aa).

112–115 (SILP) provides a ligand contact to (6S)-5,6,7,8-tetrahydrofolate.

The protein belongs to the Fmt family.

It catalyses the reaction L-methionyl-tRNA(fMet) + (6R)-10-formyltetrahydrofolate = N-formyl-L-methionyl-tRNA(fMet) + (6S)-5,6,7,8-tetrahydrofolate + H(+). Functionally, attaches a formyl group to the free amino group of methionyl-tRNA(fMet). The formyl group appears to play a dual role in the initiator identity of N-formylmethionyl-tRNA by promoting its recognition by IF2 and preventing the misappropriation of this tRNA by the elongation apparatus. The protein is Methionyl-tRNA formyltransferase of Haemophilus influenzae (strain PittGG).